The chain runs to 309 residues: Porphobilinogen deaminase (309 aa).

An S-(dipyrrolylmethanemethyl)cysteine modification is found at C242.

It belongs to the HMBS family. Monomer. Dipyrromethane serves as cofactor.

The catalysed reaction is 4 porphobilinogen + H2O = hydroxymethylbilane + 4 NH4(+). Its pathway is porphyrin-containing compound metabolism; protoporphyrin-IX biosynthesis; coproporphyrinogen-III from 5-aminolevulinate: step 2/4. Its function is as follows. Tetrapolymerization of the monopyrrole PBG into the hydroxymethylbilane pre-uroporphyrinogen in several discrete steps. This is Porphobilinogen deaminase from Pseudoalteromonas atlantica (strain T6c / ATCC BAA-1087).